A 408-amino-acid chain; its full sequence is Aspartokinase 2 (408 aa).

7 to 10 contacts ATP; it reads KFGG. 25–30 serves as a coordination point for substrate; it reads RAIAEK. S41 is a binding site for ATP. Residues 47–49, E74, 125–126, 150–153, and S153 each bind substrate; these read TDE, LE, and RGGS. ATP contacts are provided by residues 173–174 and 179–184; these read TD and FTTDPR. 2 consecutive ACT domains span residues 264-337 and 343-408; these read VTIY…TESK and IVGS…PSAV. Residues 289-291, Q295, 354-355, 368-369, and 375-376 contribute to the substrate site; these read NVD, VA, LI, and SE.

The protein belongs to the aspartokinase family. As to quaternary structure, tetramer consisting of 2 isoforms Alpha (catalytic and regulation) and of a homodimer of 2 isoforms Beta (regulation).

The catalysed reaction is L-aspartate + ATP = 4-phospho-L-aspartate + ADP. It participates in amino-acid biosynthesis; L-lysine biosynthesis via DAP pathway; (S)-tetrahydrodipicolinate from L-aspartate: step 1/4. The protein operates within amino-acid biosynthesis; L-methionine biosynthesis via de novo pathway; L-homoserine from L-aspartate: step 1/3. It functions in the pathway amino-acid biosynthesis; L-threonine biosynthesis; L-threonine from L-aspartate: step 1/5. With respect to regulation, lysine-sensitive. Regulated by degradation in response to starvation of cells for various nutrients. Ammonium starvation induced the fastest aspartokinase II decline, followed by amino acid starvation and glucose limitation. In terms of biological role, catalyzes the phosphorylation of the beta-carboxyl group of aspartic acid with ATP to yield 4-phospho-L-aspartate, which is involved in the branched biosynthetic pathway leading to the biosynthesis of amino acids threonine, isoleucine and methionine. This is Aspartokinase 2 (lysC) from Bacillus subtilis (strain 168).